The sequence spans 933 residues: Phosphoenolpyruvate carboxylase (933 aa).

Residues His-164 and Lys-595 contribute to the active site.

This sequence belongs to the PEPCase type 1 family. Mg(2+) serves as cofactor.

The enzyme catalyses oxaloacetate + phosphate = phosphoenolpyruvate + hydrogencarbonate. Functionally, forms oxaloacetate, a four-carbon dicarboxylic acid source for the tricarboxylic acid cycle. In Rhodopseudomonas palustris (strain BisB5), this protein is Phosphoenolpyruvate carboxylase.